The primary structure comprises 391 residues: 3-ketoacyl-CoA thiolase (391 aa).

Cys-95 (acyl-thioester intermediate) is an active-site residue. Residues His-347 and Cys-377 each act as proton acceptor in the active site.

It belongs to the thiolase-like superfamily. Thiolase family. In terms of assembly, heterotetramer of two alpha chains (FadB) and two beta chains (FadA).

The protein resides in the cytoplasm. It carries out the reaction an acyl-CoA + acetyl-CoA = a 3-oxoacyl-CoA + CoA. It participates in lipid metabolism; fatty acid beta-oxidation. In terms of biological role, catalyzes the final step of fatty acid oxidation in which acetyl-CoA is released and the CoA ester of a fatty acid two carbons shorter is formed. The protein is 3-ketoacyl-CoA thiolase of Pseudomonas fluorescens (strain Pf0-1).